We begin with the raw amino-acid sequence, 319 residues long: Formimidoylglutamase (319 aa).

Residues H127, D150, H152, D154, D242, and D244 each coordinate Mn(2+).

Belongs to the arginase family. Mn(2+) is required as a cofactor.

It carries out the reaction N-formimidoyl-L-glutamate + H2O = formamide + L-glutamate. It participates in amino-acid degradation; L-histidine degradation into L-glutamate; L-glutamate from N-formimidoyl-L-glutamate (hydrolase route): step 1/1. Functionally, catalyzes the conversion of N-formimidoyl-L-glutamate to L-glutamate and formamide. The polypeptide is Formimidoylglutamase (Halalkalibacterium halodurans (strain ATCC BAA-125 / DSM 18197 / FERM 7344 / JCM 9153 / C-125) (Bacillus halodurans)).